An 862-amino-acid polypeptide reads, in one-letter code: Rab GTPase-binding effector protein 1 (862 aa).

Ala-2 is modified (N-acetylalanine). Positions 11 to 345 (DVSLQQRVAE…KKTDTEEEVK (335 aa)) form a coiled coil. Lys-282 carries the N6-acetyllysine modification. The segment at 315 to 374 (ELKKKDQEEDEQQRVNKRKDNKKTDTEEEVKIPVVCALTQEESSTPLSNEEEHLDSTHGS) is disordered. Positions 336–345 (KKTDTEEEVK) are enriched in basic and acidic residues. Ser-374, Ser-377, and Ser-407 each carry phosphoserine. At Thr-408 the chain carries Phosphothreonine. Ser-410 bears the Phosphoserine mark. The stretch at 534–816 (DMCSNYEKQL…LQTELDVSEQ (283 aa)) forms a coiled coil.

It belongs to the rabaptin family. Heterodimer with RABGEF1. The heterodimer binds RAB4A and RAB5A that have been activated by GTP-binding. Interacts with TSC2. Interacts with GGA1 (via GAE domain), GGA2 (via GAE domain) and GGA3 (via GAE domain). Interacts with AP1G1 (via GAE domain). Interacts with AP1G2 (via GAE domain). Interacts with ECPAS. Interacts with KCNH1. Interacts with PKD1 (via C-terminal domain) and GGA1; the interactions recruit PKD1:PKD2 complex to GGA1 and ARL3 at trans-Golgi network. Interacts with KCNH1. In terms of processing, proteolytic cleavage by caspases in apoptotic cells causes loss of endosome fusion activity.

Its subcellular location is the cytoplasm. It localises to the early endosome. It is found in the recycling endosome. The protein localises to the cytoplasmic vesicle. Its function is as follows. Rab effector protein acting as linker between gamma-adaptin, RAB4A and RAB5A. Involved in endocytic membrane fusion and membrane trafficking of recycling endosomes. Involved in KCNH1 channels trafficking to and from the cell membrane. Stimulates RABGEF1 mediated nucleotide exchange on RAB5A. Mediates the traffic of PKD1:PKD2 complex from the endoplasmic reticulum through the Golgi to the cilium. The protein is Rab GTPase-binding effector protein 1 (Rabep1) of Mus musculus (Mouse).